The sequence spans 970 residues: Sodium/calcium exchanger 1 (970 aa).

Positions 1–32 are cleaved as a signal peptide; the sequence is MLRLRLSPTFSVGFHLLAFVPLLFSHVDLISA. At 33–71 the chain is on the extracellular side; it reads DTEMEGEGNETGECTGSYYCKKGVILPIWEPQDPSFGDK. A glycan (N-linked (GlcNAc...) asparagine) is linked at Asn-41. The helical transmembrane segment at 72-92 threads the bilayer; it reads IARATVYFVAMVYMFLGVSII. The Cytoplasmic segment spans residues 93–133; the sequence is ADRFMSSIEVITSQEKEITIKKPNGETTKTTVRIWNETVSN. Residues 134–154 form a helical membrane-spanning segment; that stretch reads LTLMALGSSAPEILLSVIEVC. The Alpha-1 repeat unit spans residues 138 to 178; it reads ALGSSAPEILLSVIEVCGHNFTAGDLGPSTIVGSAAFNMFI. Over 155 to 167 the chain is Extracellular; the sequence is GHNFTAGDLGPST. Asn-157 carries an N-linked (GlcNAc...) asparagine glycan. Residues 168–188 traverse the membrane as a helical segment; sequence IVGSAAFNMFIIIALCVYVVP. The Cytoplasmic portion of the chain corresponds to 189–201; sequence DGETRKIKHLRVF. The helical transmembrane segment at 202-222 threads the bilayer; sequence FVTAAWSIFAYTWLYIILSVI. Residues 223–228 lie on the Extracellular side of the membrane; sequence SPGVVE. A helical membrane pass occupies residues 229-249; that stretch reads VWEGLLTFFFFPICVVFAWVA. Topologically, residues 250 to 797 are cytoplasmic; the sequence is DRRLLFYKYV…FVPPTEYWNG (548 aa). The interval 251 to 270 is putative calmodulin-binding region; it reads RRLLFYKYVYKRYRAGKQRG. Ser-282 and Ser-389 each carry phosphoserine. 2 consecutive Calx-beta domains span residues 393–493 and 524–624; these read VNTE…VHLS and ATVT…LEIG. Ca(2+)-binding residues include Glu-417, Asp-453, Asp-478, Asp-479, Ile-481, Glu-483, Glu-486, Asp-530, Asp-531, Asp-532, Glu-548, Asp-584, Asp-610, Glu-611, Glu-612, and Glu-715. The chain crosses the membrane as a helical span at residues 798–818; the sequence is WACFIVSILMIGILTAFIGDL. Residues 819–821 lie on the Extracellular side of the membrane; it reads ASH. A helical membrane pass occupies residues 822 to 842; it reads FGCTIGLKDSVTAVVFVALGT. The Alpha-2 repeat unit spans residues 839–875; sequence ALGTSVPDTFASKVAATQDQYADASIGNVTGSNAVNV. At 843–871 the chain is on the cytoplasmic side; it reads SVPDTFASKVAATQDQYADASIGNVTGSN. The chain crosses the membrane as a helical span at residues 872–892; sequence AVNVFLGIGVAWSIAAIYHAA. The Extracellular segment spans residues 893-903; it reads NGEQFKVSPGT. A helical transmembrane segment spans residues 904–924; it reads LAFSVTLFTIFAFINVGVLLY. Residues 925–941 lie on the Cytoplasmic side of the membrane; sequence RRRPEIGGELGGPRTAK. The helical transmembrane segment at 942–962 threads the bilayer; the sequence is LLTSCLFVLLWLLYIFFSSLE. Over 963 to 970 the chain is Extracellular; sequence AYCHIKGF.

It belongs to the Ca(2+):cation antiporter (CaCA) (TC 2.A.19) family. SLC8 subfamily. Detected in heart (at protein level). Detected in heart.

The protein localises to the cell membrane. The enzyme catalyses Ca(2+)(in) + 3 Na(+)(out) = Ca(2+)(out) + 3 Na(+)(in). With respect to regulation, activated by micromolar levels of Ca(2+). Mediates the exchange of one Ca(2+) ion against three to four Na(+) ions across the cell membrane, and thereby contributes to the regulation of cytoplasmic Ca(2+) levels and Ca(2+)-dependent cellular processes. Contributes to Ca(2+) transport during excitation-contraction coupling in muscle. In a first phase, voltage-gated channels mediate the rapid increase of cytoplasmic Ca(2+) levels due to release of Ca(2+) stores from the endoplasmic reticulum. SLC8A1 mediates the export of Ca(2+) from the cell during the next phase, so that cytoplasmic Ca(2+) levels rapidly return to baseline. Required for normal embryonic heart development and the onset of heart contractions. This is Sodium/calcium exchanger 1 (SLC8A1) from Felis catus (Cat).